The primary structure comprises 55 residues: Accessory gland-specific peptide 70A (55 aa).

A signal peptide spans Met1 to Ser19. A hydroxyproline mark is found at Pro28, Pro32, Pro34, and Pro38. Cys43 and Cys55 are disulfide-bonded.

In terms of tissue distribution, main cells of the accessory glands of males (paragonial gland).

It localises to the secreted. Functionally, represses female sexual receptivity and stimulates oviposition. This chain is Accessory gland-specific peptide 70A (Acp70A), found in Drosophila sechellia (Fruit fly).